The sequence spans 316 residues: ATP synthase gamma chain (316 aa).

Belongs to the ATPase gamma chain family. F-type ATPases have 2 components, CF(1) - the catalytic core - and CF(0) - the membrane proton channel. CF(1) has five subunits: alpha(3), beta(3), gamma(1), delta(1), epsilon(1). CF(0) has three main subunits: a, b and c.

It is found in the cellular thylakoid membrane. Produces ATP from ADP in the presence of a proton gradient across the membrane. The gamma chain is believed to be important in regulating ATPase activity and the flow of protons through the CF(0) complex. This Prochlorococcus marinus (strain NATL1A) protein is ATP synthase gamma chain.